We begin with the raw amino-acid sequence, 561 residues long: Asparagine synthetase [glutamine-hydrolyzing] (561 aa).

Cysteine 2 (for GATase activity) is an active-site residue. The Glutamine amidotransferase type-2 domain maps to 2-191 (CGIWALFGSD…PGHYEVLDLK (190 aa)). L-glutamine contacts are provided by residues 49–53 (RLAVV), 75–77 (NGE), and aspartate 97. The 324-residue stretch at 213–536 (HALYDNVEKL…PGRADWLSHY (324 aa)) folds into the Asparagine synthetase domain. ATP is bound by residues leucine 256, isoleucine 288, and 363-364 (SG). Lysine 385 is modified (N6-acetyllysine). Threonine 545 is subject to Phosphothreonine. Position 557 is a phosphoserine (serine 557).

It carries out the reaction L-aspartate + L-glutamine + ATP + H2O = L-asparagine + L-glutamate + AMP + diphosphate + H(+). It functions in the pathway amino-acid biosynthesis; L-asparagine biosynthesis; L-asparagine from L-aspartate (L-Gln route): step 1/1. The chain is Asparagine synthetase [glutamine-hydrolyzing] (ASNS) from Homo sapiens (Human).